A 210-amino-acid polypeptide reads, in one-letter code: Probable nicotinate-nucleotide adenylyltransferase (210 aa).

This sequence belongs to the NadD family.

The catalysed reaction is nicotinate beta-D-ribonucleotide + ATP + H(+) = deamido-NAD(+) + diphosphate. It functions in the pathway cofactor biosynthesis; NAD(+) biosynthesis; deamido-NAD(+) from nicotinate D-ribonucleotide: step 1/1. In terms of biological role, catalyzes the reversible adenylation of nicotinate mononucleotide (NaMN) to nicotinic acid adenine dinucleotide (NaAD). The polypeptide is Probable nicotinate-nucleotide adenylyltransferase (Streptococcus pyogenes serotype M1).